Consider the following 81-residue polypeptide: Conotoxin ArMKLT2-0311 (81 aa).

An N-terminal signal peptide occupies residues 1–22; it reads MKLTCVLIVALLFLTACQLTTA. The span at 23–34 shows a compositional bias: basic and acidic residues; that stretch reads DDSRDKQEDPLV. Positions 23-45 are disordered; the sequence is DDSRDKQEDPLVRSHRKMQKSED. A propeptide spanning residues 23–51 is cleaved from the precursor; it reads DDSRDKQEDPLVRSHRKMQKSEDPKMAER. Disulfide bonds link Cys52-Cys67, Cys59-Cys71, and Cys66-Cys80.

The protein belongs to the conotoxin O1 superfamily. As to expression, expressed by the venom duct.

The protein resides in the secreted. The protein is Conotoxin ArMKLT2-0311 of Conus arenatus (Sand-dusted cone).